We begin with the raw amino-acid sequence, 472 residues long: Cell division protein FtsP (472 aa).

The tat-type signal signal peptide spans 1 to 32; sequence MSLSRRRFIQASGLALCAGGLPLQARASGAQA.

The protein belongs to the FtsP family. In terms of processing, predicted to be exported by the Tat system. The position of the signal peptide cleavage has not been experimentally proven.

The protein resides in the periplasm. Its function is as follows. Cell division protein that is required for growth during stress conditions. May be involved in protecting or stabilizing the divisomal assembly under conditions of stress. In Edwardsiella tarda (strain FL6-60), this protein is Cell division protein FtsP.